Reading from the N-terminus, the 1894-residue chain is Plexin-A2 (1894 aa).

The first 34 residues, 1–34, serve as a signal peptide directing secretion; it reads MEQRRFYLRAMQADNLSVVLLSVAWLLLARGTTG. N-linked (GlcNAc...) asparagine glycans are attached at residues Asn15 and Asn76. The Sema domain maps to 35–508; the sequence is MPQYSTFHSE…SERQVTRVPV (474 aa). The Extracellular segment spans residues 35–1237; that stretch reads MPQYSTFHSE…VISDSLLTLP (1203 aa). 2 disulfide bridges follow: Cys94–Cys103 and Cys129–Cys137. N-linked (GlcNAc...) asparagine glycosylation is found at Asn163 and Asn327. Disulfide bonds link Cys284/Cys405, Cys300/Cys356, Cys374/Cys393, Cys511/Cys528, Cys517/Cys559, Cys520/Cys537, Cys531/Cys543, and Cys594/Cys613. N-linked (GlcNAc...) asparagine glycans are attached at residues Asn598, Asn696, and Asn756. IPT/TIG domains are found at residues 858–951, 954–1037, 1041–1139, and 1143–1228; these read PQIT…QYTF, PSVL…QFEY, PRVQ…KFIY, and PTFE…SVSV. Residues Asn1180 and Asn1205 are each glycosylated (N-linked (GlcNAc...) asparagine). A helical transmembrane segment spans residues 1238–1258; it reads AIISIAAGGSLLLIIVIIVLI. Topologically, residues 1259 to 1894 are cytoplasmic; it reads AYKRKSREND…HLINAMSIES (636 aa). Positions 1261–1310 form a coiled coil; sequence KRKSRENDLTLKRLQMQMDNLESRVALECKEAFAELQTDINELTSDLDRS. Ser1612 carries the phosphoserine modification.

The protein belongs to the plexin family. In terms of assembly, homodimer. Interacts with RND1. Interacts directly with NRP1 and NRP2. The PLXNA2 homodimer interacts with a SEMA6A homodimer, giving rise to a heterotetramer.

Its subcellular location is the cell membrane. In terms of biological role, coreceptor for SEMA3A and SEMA6A. Necessary for signaling by SEMA6A and class 3 semaphorins and subsequent remodeling of the cytoskeleton. Plays a role in axon guidance, invasive growth and cell migration. Class 3 semaphorins bind to a complex composed of a neuropilin and a plexin. The plexin modulates the affinity of the complex for specific semaphorins, and its cytoplasmic domain is required for the activation of down-stream signaling events in the cytoplasm. The polypeptide is Plexin-A2 (Plxna2) (Mus musculus (Mouse)).